The primary structure comprises 88 residues: UPF0495 protein DEHA2C16280g (88 aa).

A helical transmembrane segment spans residues 25–47 (YPLFAAMGVAVASGCFFTYRHFA).

It belongs to the UPF0495 family.

Its subcellular location is the membrane. This is UPF0495 protein DEHA2C16280g from Debaryomyces hansenii (strain ATCC 36239 / CBS 767 / BCRC 21394 / JCM 1990 / NBRC 0083 / IGC 2968) (Yeast).